We begin with the raw amino-acid sequence, 717 residues long: Polyribonucleotide nucleotidyltransferase (717 aa).

Asp-495 and Asp-501 together coordinate Mg(2+). Positions 562–624 (PRMIMIQIPK…TALDSALSQI (63 aa)) constitute a KH domain. In terms of domain architecture, S1 motif spans 634 to 703 (GEVYEGKVKS…KTGKYRLSRK (70 aa)).

It belongs to the polyribonucleotide nucleotidyltransferase family. It depends on Mg(2+) as a cofactor.

It is found in the cytoplasm. It carries out the reaction RNA(n+1) + phosphate = RNA(n) + a ribonucleoside 5'-diphosphate. Involved in mRNA degradation. Catalyzes the phosphorolysis of single-stranded polyribonucleotides processively in the 3'- to 5'-direction. The protein is Polyribonucleotide nucleotidyltransferase of Cytophaga hutchinsonii (strain ATCC 33406 / DSM 1761 / CIP 103989 / NBRC 15051 / NCIMB 9469 / D465).